A 2494-amino-acid chain; its full sequence is MSSSGYPPNQGAFSTEQGRYSSHPVQYTFPSSRHQQEFPVPEYRSSHLEASQLLQQQQLRRRPSLLSEFHPVSDRPQDRRQGYEQQYHSVTQNEHEALESKRPRLDVSDSHYRVGAASVVPLVPTIQEGVRVQSEVKKEQGLPSKHETTSSPLSGQPGEEQEASPSKLSKEELIQSMDRVDREIAKVEQQILKLKKKQQQLEEEAAKPPEPEKPVSPPPVEQKHRSIVQIIYDENRKKAEEAHKILEGLGPKVELPLYNQPSDTKVYHENIKTNQVMRKKLILFFKRRNHARKLREQNICQRYDQLMEAWEKKVDRIENNPRRKAKESKTREYYEKQFPEIRKQREQQERFQRVGQRGAGLSATIARSEHEISEIIDGLSEQENNEKQMRQLSVIPPMMFDAEQRRVKFINMNGLMEDPMKVYKDRQFMNVWTDHEKEIFKEKFVQHPKNFGLIASYLERKTVSDCVLYYYLTKKNENFKALVRRNYPKRRGRNQQQITRPAQEEKEIEKVEEEKAERNDKKEEERREEEEKEEKEELRDGTKDRTDAIAEDGEDKEQSTPRGRKTANSQGRRKGRITRSMASEAAAAANAASTATTAPATTTSTTATTTTAALVPVAPPPEEPTPPPTQEQSLVEHGRNWGAIAKMVGSKSESQCKNFYFNYKRRHNLDNLLQQHKQKSSRRPREERDVSQCESVASTVSAQEDEENEASNEEENAEDSEGAENSSDTESAPSPSPAEAAKLGDDAVDRTTSSVSIEAPPEQDAASKSVSDSSPTPTVENIKPPETQYTELKVKEEISTETEEAMEVEERSQGAEIKSTLSLPVQTKAEPDEVESKPSESAEVKIEEDTKDQDMERLMDRAEATDMVYAPPLHISRGRQESQSDNDSSATCSADEEVDGEPERPRIYTLDSKPSLLNPAGTILISSSMKQGPMDLQQLQHRAAVIPPMASCSPCNITTGTSNFSMYQRHLYENNLLEEQRQRQEQLSLESRMSASPGNMSKSPNMDWEGKSVYMPYTEVKRAFEHEAQMQNVARSVSPYRLSPREVSRASPQVDMNPARYCVPPVLQPAPHQVITSLSDGARLPVTRPTRPPPPLIPSSKTSATSSDKPSFITGGSISQGTPGTYLTSLSQSYSQETVKPSVGSISLGLPRQQESAKTGSVTYIKQEEFSPRGQSSQPEGLLVRAQHEGVVRGTMTAIQEGSITRGTPATKVPIEAVSTLRGSITQGTPALSQSGIAADVLLKTTITRLATEDIGSPERCRDETSAKGHVIYEGKSGHIVSYDTAIKNMREGTRSPRTAPEVTLKRTFDTMEGNIKQAMSVREAAVSGPMEGLICRTLPKGSTHAEIKDRQVLSGSIMKGTPRTTSDSFEDGLKYAKQIKLESPPIRSFEGAISKGKPYECVTTIKEMGRSIHEIPRQDLGSQESRKTPESSRQIIEGSISQGTPIKYEGTSGQSAIKHNVKSLITGPSNLSRGLPQMEVMPENLKMGERSKYEDTKSSEAIRSRHTSVVSSGPSVLRSTLHEASKSQLSPGVYEDNNARRTPVNYPSPMSRSSPMARSAEVGLTPGKSSSHERKSTLTPTQRENIVVKSPVPGVDPTAAHSPFDPHLRGAPPGDVYRTHLPPHLDPALQFHRPLDPAAAAAYLFQRQLSPTPGYPSQYQLYAMENTRQTILNDYITSQQMQVNLRPDVARGLSPRDQGLAIPYPGARGIIDLTNMPPAILVPHPGGTSTPPMDRITYIPGTQLAFPPRPYNPASMSPGHPTHLAAANSVSAERERERERDRERDREREKEQRERERDRERERERLAAAPSDHYLRPVSEQPGRPGSHGFVRSPSPSVRAQESIMQQRPSIFQGTNGKSVITPLDAAQLRIMPPTPGAASITQGIPASRYSTAADALAALVDAAASAPQMEVVKPKEMKHDPARSEESLSRRNVLEQQQQQQQIDCERRVMQSPYTSSSFSGSKSQGQPSPAVYSEAGKEKTAHTKSRYVEELRMRGKTTITAANFIDVIITQQIASDKDGRDRNSQSSDSSSSHSSHRYDAPRDTIEVISPANSPVQEKESYPPEIPKSSQTESESSRKYEGQPNRYRQQQESPSPQQTIPGHVPQTHRLITLADHICQIITQDFARNQPVNQALQQPPASTFQSTNPSSTPVRTKASSRFSPESQVQPVHNQRPASRVSPENVLDRPRGRPGKSPDRGHISEPYEPISPPQAPLLHAKQDSMLLLSQRQEPPEQRNDSRSPGNISYLPSFFTKLENTSPMVMYKKQEIFRKLNSSGGGDSEMAAAQPGTEIFNLPAVTTSGAISSRGHSFADPASNLGLEDIIRKALMGNFDDKSEDHSVLVGVAQGNPSGTQNSEARREEANPSPNSGGGTHKQKLISKYGSRKTKSPISGSQTYLGAERPSSVSSVHSEGDYRQASAWAWEDRPSSTGSTQFPYNPLTMGMLNSTPPSSMSCAPTSMTQTSAHQQSRIWEREPAPLLSEQYETLSDSDE.

Over residues 1–33 (MSSSGYPPNQGAFSTEQGRYSSHPVQYTFPSSR) the composition is skewed to polar residues. Disordered stretches follow at residues 1–38 (MSSSGYPPNQGAFSTEQGRYSSHPVQYTFPSSRHQQEF), 53–106 (LLQQ…PRLD), 134–170 (SEVKKEQGLPSKHETTSSPLSGQPGEEQEASPSKLSK), and 198–222 (QQQLEEEAAKPPEPEKPVSPPPVEQ). Basic and acidic residues predominate over residues 71 to 82 (PVSDRPQDRRQG). Positions 83 to 92 (YEQQYHSVTQ) are enriched in polar residues. Composition is skewed to basic and acidic residues over residues 93–106 (NEHEALESKRPRLD), 134–148 (SEVKKEQGLPSKHET), and 204–213 (EAAKPPEPEK). Residues 154–304 (SGQPGEEQEA…REQNICQRYD (151 aa)) form an interaction with tbl1xr1 region. Residues 168–208 (LSKEELIQSMDRVDREIAKVEQQILKLKKKQQQLEEEAAKP) adopt a coiled-coil conformation. The SANT 1 domain occupies 427-478 (QFMNVWTDHEKEIFKEKFVQHPKNFGLIASYLERKTVSDCVLYYYLTKKNEN). Disordered regions lie at residues 488-638 (PKRR…VEHG), 671-913 (NLLQ…LDSK), 981-1007 (RQRQEQLSLESRMSASPGNMSKSPNMD), 1081-1124 (GARL…GTPG), 1413-1434 (IHEIPRQDLGSQESRKTPESSR), 1488-1585 (MGER…TQRE), 1745-1845 (LAFP…QESI), and 1912-1987 (EVVK…AHTK). Composition is skewed to basic and acidic residues over residues 502–525 (AQEEKEIEKVEEEKAERNDKKEEE) and 535–548 (KEELRDGTKDRTDA). Residues 502 to 549 (AQEEKEIEKVEEEKAERNDKKEEERREEEEKEEKEELRDGTKDRTDAI) adopt a coiled-coil conformation. Low complexity predominate over residues 582–616 (ASEAAAAANAASTATTAPATTTSTTATTTTAALVP). A compositionally biased stretch (pro residues) spans 617–629 (VAPPPEEPTPPPT). Residues 622 to 668 (EEPTPPPTQEQSLVEHGRNWGAIAKMVGSKSESQCKNFYFNYKRRHN) enclose the SANT 2 domain. Polar residues predominate over residues 692-702 (QCESVASTVSA). Positions 698-726 (STVSAQEDEENEASNEEENAEDSEGAENS) form a coiled coil. A compositionally biased stretch (acidic residues) spans 703-722 (QEDEENEASNEEENAEDSEG). Low complexity predominate over residues 723–741 (AENSSDTESAPSPSPAEAA). Residues 766–779 (ASKSVSDSSPTPTV) are compositionally biased toward polar residues. The span at 829–864 (AEPDEVESKPSESAEVKIEEDTKDQDMERLMDRAEA) shows a compositional bias: basic and acidic residues. Polar residues-rich tracts occupy residues 881–892 (ESQSDNDSSATC), 993–1004 (MSASPGNMSKSP), and 1104–1124 (ATSSDKPSFITGGSISQGTPG). Residues 1488 to 1504 (MGERSKYEDTKSSEAIR) show a composition bias toward basic and acidic residues. Positions 1508 to 1519 (TSVVSSGPSVLR) are enriched in polar residues. A compositionally biased stretch (low complexity) spans 1548–1561 (PSPMSRSSPMARSA). Residues 1771–1810 (VSAERERERERDRERDREREKEQRERERDRERERERLAAA) adopt a coiled-coil conformation. Residues 1773-1807 (AERERERERDRERDREREKEQRERERDRERERERL) show a composition bias toward basic and acidic residues. Residues 1835 to 1845 (PSPSVRAQESI) show a composition bias toward polar residues. A compositionally biased stretch (basic and acidic residues) spans 1914 to 1935 (VKPKEMKHDPARSEESLSRRNV). Residues 1953–1972 (QSPYTSSSFSGSKSQGQPSP) are compositionally biased toward low complexity. The segment covering 1978–1987 (AGKEKTAHTK) has biased composition (basic and acidic residues). Positions 2008–2012 (IDVII) match the CORNR box 1 motif. Residues 2018-2105 (SDKDGRDRNS…PSPQQTIPGH (88 aa)) form a disordered region. Low complexity predominate over residues 2027–2036 (SQSSDSSSSH). The segment covering 2039-2048 (HRYDAPRDTI) has biased composition (basic and acidic residues). Residues 2088–2102 (RYRQQQESPSPQQTI) are compositionally biased toward polar residues. Residues 2119–2123 (ICQII) carry the CORNR box 2 motif. Over residues 2135-2177 (QALQQPPASTFQSTNPSSTPVRTKASSRFSPESQVQPVHNQRP) the composition is skewed to polar residues. The disordered stretch occupies residues 2135-2216 (QALQQPPAST…YEPISPPQAP (82 aa)). The span at 2186–2205 (VLDRPRGRPGKSPDRGHISE) shows a compositional bias: basic and acidic residues. The short motif at 2322 to 2326 (LEDII) is the CORNR box 3 element. Disordered regions lie at residues 2346-2413 (GVAQ…SVHS) and 2446-2494 (MLNS…DSDE). Over residues 2376 to 2390 (HKQKLISKYGSRKTK) the composition is skewed to basic residues. Composition is skewed to polar residues over residues 2446 to 2472 (MLNSTPPSSMSCAPTSMTQTSAHQQSR) and 2485 to 2494 (QYETLSDSDE).

It belongs to the N-CoR nuclear receptor corepressors family. Forms a large corepressor complex that contains sin3a/b, histone deacetylases hdac1 and hdac2, rbbp4 and possibly rbbp7. Interacts with the thyroid receptor (TR, composed of rxra and thrb) and the retinoid acid receptor (RAR, composed of rxra and rara) in the absence of ligand. Interacts with tbl1xr1. Interacts with zbtb33/kaiso.

Its subcellular location is the nucleus. Mediates transcriptional repression by certain nuclear receptors. Participates in complexes which promote histone deacetylation and the formation of repressive chromatin structures which may impede access by the basal transcription machinery. In association with hdac3, may play a role in the regulation of the circadian clock. This is Nuclear receptor corepressor 1 (ncor1) from Xenopus tropicalis (Western clawed frog).